A 39-amino-acid polypeptide reads, in one-letter code: Photosystem II reaction center protein J (39 aa).

Residues 7–27 (IPLWIVAVVVGLGVVTVVGLF) form a helical membrane-spanning segment.

Belongs to the PsbJ family. PSII is composed of 1 copy each of membrane proteins PsbA, PsbB, PsbC, PsbD, PsbE, PsbF, PsbH, PsbI, PsbJ, PsbK, PsbL, PsbM, PsbT, PsbX, PsbY, PsbZ, Psb30/Ycf12, peripheral proteins PsbO, CyanoQ (PsbQ), PsbU, PsbV and a large number of cofactors. It forms dimeric complexes.

Its subcellular location is the cellular thylakoid membrane. Its function is as follows. One of the components of the core complex of photosystem II (PSII). PSII is a light-driven water:plastoquinone oxidoreductase that uses light energy to abstract electrons from H(2)O, generating O(2) and a proton gradient subsequently used for ATP formation. It consists of a core antenna complex that captures photons, and an electron transfer chain that converts photonic excitation into a charge separation. The protein is Photosystem II reaction center protein J of Synechococcus sp. (strain JA-3-3Ab) (Cyanobacteria bacterium Yellowstone A-Prime).